We begin with the raw amino-acid sequence, 263 residues long: Uracil-DNA glycosylase (263 aa).

Residue aspartate 94 is the Proton acceptor of the active site.

The protein belongs to the uracil-DNA glycosylase (UDG) superfamily. UNG family.

The protein localises to the cytoplasm. It catalyses the reaction Hydrolyzes single-stranded DNA or mismatched double-stranded DNA and polynucleotides, releasing free uracil.. Its function is as follows. Excises uracil residues from the DNA which can arise as a result of misincorporation of dUMP residues by DNA polymerase or due to deamination of cytosine. This chain is Uracil-DNA glycosylase, found in Ralstonia pickettii (strain 12J).